The chain runs to 289 residues: Shikimate dehydrogenase (NADP(+)) (289 aa).

Shikimate contacts are provided by residues 22-24 and Thr-69; that span reads SRS. The active-site Proton acceptor is the Lys-73. Glu-85 is a binding site for NADP(+). 2 residues coordinate shikimate: Asn-94 and Asp-109. NADP(+)-binding positions include 134-138, 158-163, and Ile-226; these read GAGGA and NRTLSR. Position 228 (Tyr-228) interacts with shikimate. Residue Gly-249 participates in NADP(+) binding.

Belongs to the shikimate dehydrogenase family. Homodimer.

The enzyme catalyses shikimate + NADP(+) = 3-dehydroshikimate + NADPH + H(+). It participates in metabolic intermediate biosynthesis; chorismate biosynthesis; chorismate from D-erythrose 4-phosphate and phosphoenolpyruvate: step 4/7. Involved in the biosynthesis of the chorismate, which leads to the biosynthesis of aromatic amino acids. Catalyzes the reversible NADPH linked reduction of 3-dehydroshikimate (DHSA) to yield shikimate (SA). The chain is Shikimate dehydrogenase (NADP(+)) from Brucella melitensis biotype 2 (strain ATCC 23457).